Reading from the N-terminus, the 504-residue chain is Cytochrome P450 4A25 (504 aa).

A run of 2 helical transmembrane segments spans residues 6 to 26 (LASA…LLLL) and 110 to 130 (APVL…LLNG). Cys451 contacts heme.

It belongs to the cytochrome P450 family. It depends on heme as a cofactor.

The protein resides in the endoplasmic reticulum membrane. It catalyses the reaction an omega-methyl-long-chain fatty acid + reduced [NADPH--hemoprotein reductase] + O2 = an omega-hydroxy-long-chain fatty acid + oxidized [NADPH--hemoprotein reductase] + H2O + H(+). In terms of biological role, catalyzes the omega- and (omega-1)-hydroxylation of various fatty acids such as laurate and palmitate. Has no activity toward taurochenodeoxycholic acid. The sequence is that of Cytochrome P450 4A25 (CYP4A25) from Sus scrofa (Pig).